A 97-amino-acid chain; its full sequence is Aspartyl/glutamyl-tRNA(Asn/Gln) amidotransferase subunit C (97 aa).

Belongs to the GatC family. As to quaternary structure, heterotrimer of A, B and C subunits.

The catalysed reaction is L-glutamyl-tRNA(Gln) + L-glutamine + ATP + H2O = L-glutaminyl-tRNA(Gln) + L-glutamate + ADP + phosphate + H(+). It carries out the reaction L-aspartyl-tRNA(Asn) + L-glutamine + ATP + H2O = L-asparaginyl-tRNA(Asn) + L-glutamate + ADP + phosphate + 2 H(+). Functionally, allows the formation of correctly charged Asn-tRNA(Asn) or Gln-tRNA(Gln) through the transamidation of misacylated Asp-tRNA(Asn) or Glu-tRNA(Gln) in organisms which lack either or both of asparaginyl-tRNA or glutaminyl-tRNA synthetases. The reaction takes place in the presence of glutamine and ATP through an activated phospho-Asp-tRNA(Asn) or phospho-Glu-tRNA(Gln). This chain is Aspartyl/glutamyl-tRNA(Asn/Gln) amidotransferase subunit C, found in Synechococcus sp. (strain CC9605).